The primary structure comprises 305 residues: Porphobilinogen deaminase (305 aa).

An S-(dipyrrolylmethanemethyl)cysteine modification is found at C241.

The protein belongs to the HMBS family. Monomer. Dipyrromethane is required as a cofactor.

The catalysed reaction is 4 porphobilinogen + H2O = hydroxymethylbilane + 4 NH4(+). Its pathway is porphyrin-containing compound metabolism; protoporphyrin-IX biosynthesis; coproporphyrinogen-III from 5-aminolevulinate: step 2/4. In terms of biological role, tetrapolymerization of the monopyrrole PBG into the hydroxymethylbilane pre-uroporphyrinogen in several discrete steps. The polypeptide is Porphobilinogen deaminase (Exiguobacterium sp. (strain ATCC BAA-1283 / AT1b)).